The following is a 310-amino-acid chain: Nuclear hormone receptor family member nhr-89 (310 aa).

Positions 5–79 form a DNA-binding region, nuclear receptor; the sequence is EGPCRVCHSV…SGMRRDCVRK (75 aa). 2 NR C4-type zinc fingers span residues 8 to 29 and 43 to 67; these read CRVC…CMSC and CPAN…YNKC. Residues 101 to 310 form the NR LBD domain; sequence KLSESYEELL…TLHQKYQIPF (210 aa).

Belongs to the nuclear hormone receptor family.

It is found in the nucleus. Its function is as follows. Orphan nuclear receptor. In Caenorhabditis elegans, this protein is Nuclear hormone receptor family member nhr-89 (nhr-89).